The sequence spans 957 residues: Glycine dehydrogenase (decarboxylating) (957 aa).

Position 708 is an N6-(pyridoxal phosphate)lysine (Lys-708).

It belongs to the GcvP family. As to quaternary structure, the glycine cleavage system is composed of four proteins: P, T, L and H. Pyridoxal 5'-phosphate serves as cofactor.

It carries out the reaction N(6)-[(R)-lipoyl]-L-lysyl-[glycine-cleavage complex H protein] + glycine + H(+) = N(6)-[(R)-S(8)-aminomethyldihydrolipoyl]-L-lysyl-[glycine-cleavage complex H protein] + CO2. The glycine cleavage system catalyzes the degradation of glycine. The P protein binds the alpha-amino group of glycine through its pyridoxal phosphate cofactor; CO(2) is released and the remaining methylamine moiety is then transferred to the lipoamide cofactor of the H protein. This Escherichia coli O17:K52:H18 (strain UMN026 / ExPEC) protein is Glycine dehydrogenase (decarboxylating).